We begin with the raw amino-acid sequence, 184 residues long: Holliday junction branch migration complex subunit RuvA (184 aa).

The domain I stretch occupies residues 1 to 61; that stretch reads MIAALRGNIF…ENEYTLYGFA (61 aa). The interval 62 to 135 is domain II; that stretch reads DKNEKKLFDS…GEFEVVFEEQ (74 aa). A region of interest (flexible linker) is located at residue Gln-135. The segment at 135–184 is domain III; the sequence is QNPVFNQALSALESLGFNKNDIVKALNGIKSDNLEETIKLALKKLSKDIK.

Belongs to the RuvA family. Homotetramer. Forms an RuvA(8)-RuvB(12)-Holliday junction (HJ) complex. HJ DNA is sandwiched between 2 RuvA tetramers; dsDNA enters through RuvA and exits via RuvB. An RuvB hexamer assembles on each DNA strand where it exits the tetramer. Each RuvB hexamer is contacted by two RuvA subunits (via domain III) on 2 adjacent RuvB subunits; this complex drives branch migration. In the full resolvosome a probable DNA-RuvA(4)-RuvB(12)-RuvC(2) complex forms which resolves the HJ.

Its subcellular location is the cytoplasm. The RuvA-RuvB-RuvC complex processes Holliday junction (HJ) DNA during genetic recombination and DNA repair, while the RuvA-RuvB complex plays an important role in the rescue of blocked DNA replication forks via replication fork reversal (RFR). RuvA specifically binds to HJ cruciform DNA, conferring on it an open structure. The RuvB hexamer acts as an ATP-dependent pump, pulling dsDNA into and through the RuvAB complex. HJ branch migration allows RuvC to scan DNA until it finds its consensus sequence, where it cleaves and resolves the cruciform DNA. The sequence is that of Holliday junction branch migration complex subunit RuvA from Nautilia profundicola (strain ATCC BAA-1463 / DSM 18972 / AmH).